The chain runs to 252 residues: Putative hydro-lyase OB3382 (252 aa).

This sequence belongs to the D-glutamate cyclase family.

The protein is Putative hydro-lyase OB3382 of Oceanobacillus iheyensis (strain DSM 14371 / CIP 107618 / JCM 11309 / KCTC 3954 / HTE831).